The sequence spans 207 residues: Probable GTP-binding protein EngB (207 aa).

Residues 23 to 197 (AGIEVVFAGR…ETVIGRWLFA (175 aa)) enclose the EngB-type G domain. GTP contacts are provided by residues 31 to 38 (GRSNAGKS), 58 to 62 (GRTQL), 76 to 79 (DLPG), 143 to 146 (TKAD), and 176 to 178 (FSS). Positions 38 and 60 each coordinate Mg(2+).

The protein belongs to the TRAFAC class TrmE-Era-EngA-EngB-Septin-like GTPase superfamily. EngB GTPase family. It depends on Mg(2+) as a cofactor.

In terms of biological role, necessary for normal cell division and for the maintenance of normal septation. The polypeptide is Probable GTP-binding protein EngB (Methylobacillus flagellatus (strain ATCC 51484 / DSM 6875 / VKM B-1610 / KT)).